A 119-amino-acid chain; its full sequence is Ribonuclease P protein component (119 aa).

Belongs to the RnpA family. In terms of assembly, consists of a catalytic RNA component (M1 or rnpB) and a protein subunit.

The enzyme catalyses Endonucleolytic cleavage of RNA, removing 5'-extranucleotides from tRNA precursor.. In terms of biological role, RNaseP catalyzes the removal of the 5'-leader sequence from pre-tRNA to produce the mature 5'-terminus. It can also cleave other RNA substrates such as 4.5S RNA. The protein component plays an auxiliary but essential role in vivo by binding to the 5'-leader sequence and broadening the substrate specificity of the ribozyme. The sequence is that of Ribonuclease P protein component from Streptococcus pyogenes serotype M12 (strain MGAS2096).